The following is a 334-amino-acid chain: Stabilizer of axonemal microtubules 3 (334 aa).

Disordered regions lie at residues 81–105 (AYVP…PTRT), 128–153 (YQSS…YFGP), and 233–260 (QVWS…RVPR). Residues 128-141 (YQSSETRAQYTGSP) show a composition bias toward polar residues. Over residues 240 to 251 (QRPPCPRSSRPP) the composition is skewed to pro residues.

The protein is Stabilizer of axonemal microtubules 3 of Homo sapiens (Human).